Reading from the N-terminus, the 2378-residue chain is Dimodular nonribosomal peptide synthase (2378 aa).

Carrier domains lie at 961-1036 (APRT…DLAQ) and 2036-2111 (GPRT…EMGS). Residues S996 and S2071 each carry the O-(pantetheine 4'-phosphoryl)serine modification.

The protein belongs to the ATP-dependent AMP-binding enzyme family. The cofactor is pantetheine 4'-phosphate.

It carries out the reaction holo-[peptidyl-carrier protein] + L-threonine + ATP = L-threonyl-[peptidyl-carrier protein] + AMP + diphosphate. It catalyses the reaction holo-[peptidyl-carrier protein] + glycine + ATP = glycyl-[peptidyl-carrier protein] + AMP + diphosphate. It participates in siderophore biosynthesis; bacillibactin biosynthesis. Specifically adenylates L-threonine and, to a lesser extent, glycine and covalently loads both amino acids onto their corresponding peptidyl carrier domains. The sequence is that of Dimodular nonribosomal peptide synthase (dhbF) from Bacillus subtilis (strain 168).